The sequence spans 357 residues: MNTSTTTKSKNKPPKSTPSTFIKIIEFWFYLIQILTVLFSWRVYFLFIDSKKKIENNNNNDNDNNNTNKNDEKRYLTFKEKVQHNFFCLFTDTLYFMMLIITCTLFFWRLKDTLSLLKKSDSSKYKQIIWDQFSGGFVEFGSFTVLLLLKWPVIFKVFWNKGTEKEDKSTWSQIFMREFSQEVDKNKLGGPKPPTTNTTNFSGNGSSSSTTNATSSSSSQANNKRAMSDDEWRHAFRRDLQNIGFEFDSQTGDVSKFPPTEVMEQYQKSAEFRDLILASGSLKAGSEQQDKNKNNNNNNNNNGPKIEEYDNQKQEEEENEEKETNKQQTQKDDEKETSTTTTSSNKKSKKGKKNKRN.

Transmembrane regions (helical) follow at residues 21 to 41 (FIKI…LFSW), 86 to 106 (FFCL…CTLF), and 135 to 155 (GGFV…PVIF). Disordered regions lie at residues 184–229 (DKNK…AMSD) and 283–357 (KAGS…NKRN). A compositionally biased stretch (low complexity) spans 195–223 (TTNTTNFSGNGSSSSTTNATSSSSSQANN). 2 stretches are compositionally biased toward basic and acidic residues: residues 305-314 (KIEEYDNQKQ) and 322-337 (KETN…EKET). Residues 305 to 337 (KIEEYDNQKQEEEENEEKETNKQQTQKDDEKET) adopt a coiled-coil conformation. The span at 346–357 (KKSKKGKKNKRN) shows a compositional bias: basic residues.

It is found in the membrane. This is an uncharacterized protein from Dictyostelium discoideum (Social amoeba).